Consider the following 472-residue polypeptide: Argininosuccinate lyase (472 aa).

The protein belongs to the lyase 1 family. Argininosuccinate lyase subfamily.

Its subcellular location is the cytoplasm. It catalyses the reaction 2-(N(omega)-L-arginino)succinate = fumarate + L-arginine. The protein operates within amino-acid biosynthesis; L-arginine biosynthesis; L-arginine from L-ornithine and carbamoyl phosphate: step 3/3. The polypeptide is Argininosuccinate lyase (Synechococcus sp. (strain CC9605)).